The sequence spans 418 residues: Outer membrane protein assembly factor BamB (418 aa).

Positions 1-28 (MFHNTCGRKGRFARAMGMALAISVTLSG) are cleaved as a signal peptide. Cys29 is lipidated: N-palmitoyl cysteine. Cys29 carries the S-diacylglycerol cysteine lipid modification.

The protein belongs to the BamB family. Part of the Bam complex.

The protein resides in the cell outer membrane. In terms of biological role, part of the outer membrane protein assembly complex, which is involved in assembly and insertion of beta-barrel proteins into the outer membrane. This is Outer membrane protein assembly factor BamB from Alteromonas naphthalenivorans.